A 135-amino-acid polypeptide reads, in one-letter code: Large ribosomal subunit protein uL16c (135 aa).

This sequence belongs to the universal ribosomal protein uL16 family. Part of the 50S ribosomal subunit.

The protein localises to the plastid. It is found in the chloroplast. The polypeptide is Large ribosomal subunit protein uL16c (Stigeoclonium helveticum (Green alga)).